The following is a 391-amino-acid chain: Ribosomal RNA small subunit methyltransferase H (391 aa).

Residues 1 to 23 (MDVDVQDDVQGRAGEGAEERAHD) form a disordered region. S-adenosyl-L-methionine is bound by residues 59–61 (GGH), Asp78, Leu112, Asp126, and Gln133. A disordered region spans residues 284-391 (SSSSAPPDLP…EPGATVERTP (108 aa)). Basic and acidic residues predominate over residues 368–380 (RTQEFETHPHLEP).

It belongs to the methyltransferase superfamily. RsmH family.

It localises to the cytoplasm. The catalysed reaction is cytidine(1402) in 16S rRNA + S-adenosyl-L-methionine = N(4)-methylcytidine(1402) in 16S rRNA + S-adenosyl-L-homocysteine + H(+). Functionally, specifically methylates the N4 position of cytidine in position 1402 (C1402) of 16S rRNA. This chain is Ribosomal RNA small subunit methyltransferase H, found in Kineococcus radiotolerans (strain ATCC BAA-149 / DSM 14245 / SRS30216).